Consider the following 246-residue polypeptide: Large ribosomal subunit protein uL4 (246 aa).

A disordered region spans residues alanine 37–asparagine 103. Basic and acidic residues predominate over residues proline 92 to asparagine 103.

Belongs to the universal ribosomal protein uL4 family. In terms of assembly, part of the 50S ribosomal subunit. Interacts weakly with proteins L18e, L24 and L37e. Has been cross-linked to L18e.

Functionally, one of the primary rRNA binding proteins, this protein initially binds near the 5'-end of the 23S rRNA. It is important during the early stages of 50S assembly. Its function is as follows. Makes multiple contacts with different domains of the 23S rRNA in the assembled 50S subunit. In terms of biological role, forms part of the polypeptide exit tunnel, in which it helps forms a bend with protein L22. Contacts the macrolide antibiotic spiramycin in the polypeptide exit tunnel. This Haloarcula marismortui (strain ATCC 43049 / DSM 3752 / JCM 8966 / VKM B-1809) (Halobacterium marismortui) protein is Large ribosomal subunit protein uL4 (rpl4).